Here is a 643-residue protein sequence, read N- to C-terminus: Ecto-NOX disulfide-thiol exchanger 1 (643 aa).

The 80-residue stretch at Lys-142–Ala-221 folds into the RRM domain. Coiled-coil stretches lie at residues Val-307–Ile-342 and Gln-425–Leu-570.

Belongs to the ENOX family. Requires Cu cation as cofactor. In terms of tissue distribution, expressed in lymphocyte cells, breast and breast cancer (at protein level). Found in the sera of cancer patients with a wide variety of cancers including breast, prostate, lung and ovarian cancers, leukemias, and lymphomas. Found also in the serum of healthy volunteers or patients with disorders other than cancer. Probably shed into serum by cancer cells.

It is found in the cell membrane. Its subcellular location is the secreted. The protein resides in the extracellular space. Its activity is regulated as follows. Not inhibited by the antitumor sulfonylurea LY181984, the vabilloid capsaicin, and retinoids. Its function is as follows. Probably acts as a terminal oxidase of plasma electron transport from cytosolic NAD(P)H via hydroquinones to acceptors at the cell surface. Hydroquinone oxidase activity alternates with a protein disulfide-thiol interchange/oxidoreductase activity which may control physical membrane displacements associated with vesicle budding or cell enlargement. The activities oscillate with a period length of 24 minutes and play a role in control of the ultradian cellular biological clock. The chain is Ecto-NOX disulfide-thiol exchanger 1 (ENOX1) from Homo sapiens (Human).